We begin with the raw amino-acid sequence, 159 residues long: Probable acetolactate synthase small subunit (159 aa).

An ACT domain is found at 4 to 78; that stretch reads TIAVLVENKP…ETIKVSEITE (75 aa).

Belongs to the acetolactate synthase small subunit family. Dimer of large and small chains.

It catalyses the reaction 2 pyruvate + H(+) = (2S)-2-acetolactate + CO2. The protein operates within amino-acid biosynthesis; L-isoleucine biosynthesis; L-isoleucine from 2-oxobutanoate: step 1/4. It functions in the pathway amino-acid biosynthesis; L-valine biosynthesis; L-valine from pyruvate: step 1/4. This is Probable acetolactate synthase small subunit (ilvH) from Archaeoglobus fulgidus (strain ATCC 49558 / DSM 4304 / JCM 9628 / NBRC 100126 / VC-16).